The chain runs to 483 residues: Cobyric acid synthase (483 aa).

Positions 252-430 constitute a GATase cobBQ-type domain; that stretch reads ALQVVAVAYP…LHRLFDSGPF (179 aa). The Nucleophile role is filled by Cys-333. The active site involves His-422.

The protein belongs to the CobB/CobQ family. CobQ subfamily.

It functions in the pathway cofactor biosynthesis; adenosylcobalamin biosynthesis. Its function is as follows. Catalyzes amidations at positions B, D, E, and G on adenosylcobyrinic A,C-diamide. NH(2) groups are provided by glutamine, and one molecule of ATP is hydrogenolyzed for each amidation. This is Cobyric acid synthase from Halorhodospira halophila (strain DSM 244 / SL1) (Ectothiorhodospira halophila (strain DSM 244 / SL1)).